The following is a 324-amino-acid chain: Phosphate transport system permease protein PstC 2 (324 aa).

The next 6 helical transmembrane spans lie at 30–50 (ASAA…FLLV), 90–110 (LSSI…AVFL), 125–145 (MVDL…IFVL), 174–194 (AGGG…LPIV), 237–257 (VAAS…VLVI), and 290–310 (PLPT…TFLV). The region spanning 85-314 (FMVTALSSIT…VLTFLVNAAA (230 aa)) is the ABC transmembrane type-1 domain.

The protein belongs to the binding-protein-dependent transport system permease family. CysTW subfamily.

Its subcellular location is the cell membrane. Functionally, part of the binding-protein-dependent transport system for phosphate; probably responsible for the translocation of the substrate across the membrane. The sequence is that of Phosphate transport system permease protein PstC 2 (pstC2) from Mycobacterium bovis (strain ATCC BAA-935 / AF2122/97).